The primary structure comprises 296 residues: Probable endonuclease 4 (296 aa).

Zn(2+) is bound by residues histidine 68, histidine 109, glutamate 144, aspartate 178, histidine 181, histidine 213, aspartate 226, histidine 228, and glutamate 258.

The protein belongs to the AP endonuclease 2 family. Zn(2+) serves as cofactor.

It carries out the reaction Endonucleolytic cleavage to 5'-phosphooligonucleotide end-products.. Functionally, endonuclease IV plays a role in DNA repair. It cleaves phosphodiester bonds at apurinic or apyrimidinic (AP) sites, generating a 3'-hydroxyl group and a 5'-terminal sugar phosphate. The sequence is that of Probable endonuclease 4 from Staphylococcus aureus (strain Mu3 / ATCC 700698).